Reading from the N-terminus, the 229-residue chain is Uracil-DNA glycosylase (229 aa).

Asp71 (proton acceptor) is an active-site residue.

Belongs to the uracil-DNA glycosylase (UDG) superfamily. UNG family.

The protein resides in the cytoplasm. It catalyses the reaction Hydrolyzes single-stranded DNA or mismatched double-stranded DNA and polynucleotides, releasing free uracil.. Functionally, excises uracil residues from the DNA which can arise as a result of misincorporation of dUMP residues by DNA polymerase or due to deamination of cytosine. This is Uracil-DNA glycosylase from Campylobacter lari (strain RM2100 / D67 / ATCC BAA-1060).